The following is a 382-amino-acid chain: Mannitol-1-phosphate 5-dehydrogenase (382 aa).

Residue 3-14 participates in NAD(+) binding; that stretch reads AVHFGAGNIGRG.

The protein belongs to the mannitol dehydrogenase family.

The catalysed reaction is D-mannitol 1-phosphate + NAD(+) = beta-D-fructose 6-phosphate + NADH + H(+). The chain is Mannitol-1-phosphate 5-dehydrogenase from Paenarthrobacter aurescens (strain TC1).